The chain runs to 313 residues: Putative S-adenosyl-L-methionine-dependent methyltransferase MAV_4573 (313 aa).

S-adenosyl-L-methionine-binding positions include aspartate 129 and 158-159 (DL).

Belongs to the UPF0677 family.

In terms of biological role, exhibits S-adenosyl-L-methionine-dependent methyltransferase activity. The sequence is that of Putative S-adenosyl-L-methionine-dependent methyltransferase MAV_4573 from Mycobacterium avium (strain 104).